Consider the following 264-residue polypeptide: Glutamate racemase (264 aa).

Substrate is bound by residues 10-11 (DS) and 42-43 (YG). Cys-73 (proton donor/acceptor) is an active-site residue. 74-75 (NT) contributes to the substrate binding site. Cys-183 serves as the catalytic Proton donor/acceptor. Substrate is bound at residue 184 to 185 (TH).

It belongs to the aspartate/glutamate racemases family.

It catalyses the reaction L-glutamate = D-glutamate. It functions in the pathway cell wall biogenesis; peptidoglycan biosynthesis. Its function is as follows. Provides the (R)-glutamate required for cell wall biosynthesis. The sequence is that of Glutamate racemase from Streptococcus agalactiae serotype Ia (strain ATCC 27591 / A909 / CDC SS700).